A 126-amino-acid polypeptide reads, in one-letter code: Ribosome-binding factor A (126 aa).

It belongs to the RbfA family. In terms of assembly, monomer. Binds 30S ribosomal subunits, but not 50S ribosomal subunits or 70S ribosomes.

The protein resides in the cytoplasm. In terms of biological role, one of several proteins that assist in the late maturation steps of the functional core of the 30S ribosomal subunit. Associates with free 30S ribosomal subunits (but not with 30S subunits that are part of 70S ribosomes or polysomes). Required for efficient processing of 16S rRNA. May interact with the 5'-terminal helix region of 16S rRNA. This chain is Ribosome-binding factor A, found in Treponema pallidum (strain Nichols).